The following is a 43-amino-acid chain: Protein PsbN (43 aa).

Residues 7-27 form a helical membrane-spanning segment; sequence FVVGILVALVLITAFAVYTAF.

Belongs to the PsbN family.

The protein localises to the cell inner membrane. May play a role in photosystem I and II biogenesis. The sequence is that of Protein PsbN from Gloeobacter violaceus (strain ATCC 29082 / PCC 7421).